The following is a 307-amino-acid chain: MTDSSYDAQAVRSWLQGLQTQIADTLGAFDGTPFATDAWQRAPGEKLRGGGYTRILEGGNFFERAGIGFSDVAGDALPASASAARPQLAGRGFEAMGVSLVLHPHNPHCPTVHMNVRLLIATKAGEEPVFWFGGGMDLTPFYGYEEDAQHFHRTCRDALQPYGADLYPSFKRWCDEYFFLRHRNEPRGIGGIFFDDFSAPGFDQSFAMLRSVGDAFLKAYLPIIEKRRNIPYGQAERDFQAYRRGRYVEFNLVFDRGTLFGLQSGGRTESILMSMPPVVNWRYNWQPEPGTPEARLYSDFLVPREWV.

S99 serves as a coordination point for substrate. The a divalent metal cation site is built by H103 and H113. H113 serves as the catalytic Proton donor. 115-117 (NVR) is a binding site for substrate. H152 and H182 together coordinate a divalent metal cation. The important for dimerization stretch occupies residues 247–282 (YVEFNLVFDRGTLFGLQSGGRTESILMSMPPVVNWR). 265–267 (GGR) is a substrate binding site.

This sequence belongs to the aerobic coproporphyrinogen-III oxidase family. In terms of assembly, homodimer. The cofactor is a divalent metal cation.

It is found in the cytoplasm. The enzyme catalyses coproporphyrinogen III + O2 + 2 H(+) = protoporphyrinogen IX + 2 CO2 + 2 H2O. It functions in the pathway porphyrin-containing compound metabolism; protoporphyrin-IX biosynthesis; protoporphyrinogen-IX from coproporphyrinogen-III (O2 route): step 1/1. Its function is as follows. Involved in the heme biosynthesis. Catalyzes the aerobic oxidative decarboxylation of propionate groups of rings A and B of coproporphyrinogen-III to yield the vinyl groups in protoporphyrinogen-IX. This Paraburkholderia xenovorans (strain LB400) protein is Oxygen-dependent coproporphyrinogen-III oxidase.